A 203-amino-acid chain; its full sequence is uncharacterized protein (203 aa).

Residues 180–200 (VYLLLFGIPLLILIFLIIFFI) form a helical membrane-spanning segment.

Its subcellular location is the virion. It localises to the host membrane. This is an uncharacterized protein from Acanthamoeba polyphaga (Amoeba).